The chain runs to 219 residues: Large ribosomal subunit protein uL16 (219 aa).

It belongs to the universal ribosomal protein uL16 family. In terms of assembly, component of the large ribosomal subunit. Mature ribosomes consist of a small (40S) and a large (60S) subunit. The 40S subunit contains about 33 different proteins and 1 molecule of RNA (18S). The 60S subunit contains about 49 different proteins and 3 molecules of RNA (28S, 5.8S and 5S).

This Bombyx mandarina (Wild silk moth) protein is Large ribosomal subunit protein uL16 (RpL10).